Reading from the N-terminus, the 290-residue chain is 4-hydroxybenzoate octaprenyltransferase (290 aa).

Helical transmembrane passes span 23 to 43, 46 to 66, 99 to 119, 141 to 161, 163 to 183, 212 to 232, 233 to 253, and 268 to 288; these read IGAL…TPGM, LWIL…GCVV, LFVV…AMTI, LPQV…FAAV, ESLP…AVAY, TLII…IGWL, NGLG…FVYQ, and AFMN…MSYW.

Belongs to the UbiA prenyltransferase family. Mg(2+) is required as a cofactor.

It localises to the cell inner membrane. It carries out the reaction all-trans-octaprenyl diphosphate + 4-hydroxybenzoate = 4-hydroxy-3-(all-trans-octaprenyl)benzoate + diphosphate. It participates in cofactor biosynthesis; ubiquinone biosynthesis. Its function is as follows. Catalyzes the prenylation of para-hydroxybenzoate (PHB) with an all-trans polyprenyl group. Mediates the second step in the final reaction sequence of ubiquinone-8 (UQ-8) biosynthesis, which is the condensation of the polyisoprenoid side chain with PHB, generating the first membrane-bound Q intermediate 3-octaprenyl-4-hydroxybenzoate. The polypeptide is 4-hydroxybenzoate octaprenyltransferase (Salmonella paratyphi C (strain RKS4594)).